A 535-amino-acid chain; its full sequence is Sodium/hydrogen exchanger 9B2 (535 aa).

Basic and acidic residues predominate over residues 1-14 (MRNQDKRAAHKDSE). The interval 1–70 (MRNQDKRAAH…TPAEPNHLQR (70 aa)) is disordered. Residues 1-85 (MRNQDKRAAH…ACPPRGLLAR (85 aa)) lie on the Cytoplasmic side of the membrane. Composition is skewed to polar residues over residues 16-34 (STEVNHTASSYQGRQQETG) and 46-58 (TEGSNLLNNNEKM). Residues 86-103 (VITNVTMVILLWAVVWSV) traverse the membrane as a helical segment. Topologically, residues 104-112 (TGSECLPGG) are extracellular. The chain crosses the membrane as a helical span at residues 113-132 (NLFGIIMLFYCAIIGGKLFG). Residues 133-143 (LIKLPTLPPLP) lie on the Cytoplasmic side of the membrane. The chain crosses the membrane as a helical span at residues 144 to 160 (PLLGMLLAGFLIRNVPV). Over 161-170 (ISDNIQIKHK) the chain is Extracellular. Residues 171–188 (WSSALRSIALSVILVRAG) form a helical membrane-spanning segment. Residues 189–199 (LGLDSNALKKL) lie on the Cytoplasmic side of the membrane. Residues 200-226 (KGVCVRLSLGPCLIEACTSAVLAYFLM) traverse the membrane as a helical segment. Topologically, residues 227–232 (GLPWQW) are extracellular. The helical transmembrane segment at 233–241 (GFMLGFVLG) threads the bilayer. At 242–269 (AVSPAVVVPSMLLLQEGGYGVEKGIPTL) the chain is on the cytoplasmic side. V243, G274, D277, and D278 together coordinate Na(+). The chain crosses the membrane as a helical span at residues 270–289 (LMAAGSFDDILAITGFNTCL). Residues 290 to 299 (GMAFSTGSTV) are Extracellular-facing. Residues 300 to 323 (FNVLKGVLEVIIGVVTGLVLGFFI) form a helical membrane-spanning segment. At 324-338 (QYFPSSDQDNLVWKR) the chain is on the cytoplasmic side. A helical membrane pass occupies residues 339–356 (AFLVLGLSVLAVFSSTYF). Residues 357-360 (GFPG) lie on the Extracellular side of the membrane. A helical membrane pass occupies residues 361–372 (SGGLCTLVTAFL). Residues 373–389 (AGRGWASTKTDVEKVIA) lie on the Cytoplasmic side of the membrane. A helical membrane pass occupies residues 390–410 (VAWDIFQPLLFGLIGAEVLIT). Over 411–416 (ALRPET) the chain is Extracellular. Residues 417–439 (IGLCVATLGIAVLIRILVTYLMV) traverse the membrane as a helical segment. The Cytoplasmic segment spans residues 440–460 (CFAGFNIKEKIFISFAWLPKA). Residues 461–472 (TVQAAIGSVALD) form a helical membrane-spanning segment. Over 473-485 (TARSHGEKQLEGY) the chain is Extracellular. A helical membrane pass occupies residues 486–508 (GMDVLTVAFLSIIITAPVGSLLI). Residues 509–535 (GLLGPRLLQKAEQNKDEEDQGETSIQV) lie on the Cytoplasmic side of the membrane.

This sequence belongs to the monovalent cation:proton antiporter 1 (CPA1) transporter (TC 2.A.36) family. In terms of assembly, homodimer; dimerization is essential for SLC9B2 activity. Lipids seem to play a role in the stabilization of the dimerization subdomain.

It is found in the cell membrane. It localises to the mitochondrion membrane. The protein resides in the endosome membrane. Its subcellular location is the recycling endosome membrane. The protein localises to the lysosome membrane. It is found in the cytoplasmic vesicle. It localises to the secretory vesicle. The protein resides in the synaptic vesicle membrane. Its subcellular location is the cell projection. The protein localises to the cilium. It is found in the flagellum membrane. It localises to the basolateral cell membrane. The protein resides in the apical cell membrane. The catalysed reaction is Li(+)(out) + H(+)(in) = Li(+)(in) + H(+)(out). It carries out the reaction Li(+)(in) + Na(+)(out) = Li(+)(out) + Na(+)(in). The enzyme catalyses Na(+)(in) + H(+)(out) = Na(+)(out) + H(+)(in). With respect to regulation, allosterically inhibited by the N-terminal domain. Inhibited by phloretin. In terms of biological role, electroneutral Na(+) Li(+)/H(+) antiporter that extrudes Na(+) or Li(+) in exchange for external protons across the membrane. Uses the proton gradient/membrane potential to extrude sodium. Contributes to the regulation of intracellular pH and sodium homeostasis. Also able to mediate Na(+)/Li(+) antiporter activity in kidney. May play a physiological role in renal tubular function and blood pressure homeostasis. Plays an important role for insulin secretion and clathrin-mediated endocytosis in beta-cells. Involved in sperm motility and fertility. It is controversial whether SLC9B2 plays a role in osteoclast differentiation or not. The chain is Sodium/hydrogen exchanger 9B2 (SLC9B2) from Bison bison bison (North American plains bison).